A 453-amino-acid polypeptide reads, in one-letter code: MQAIAKNDIKTGTVVDLTHEGHGVVKIDRFPIFIPQALINEQIEYKIIKVKKNFAIGKLLNINTRSENRVAPPCIYYERCGGCQLQHLSYEAQLEMKKEQVINLFQRKAHFDNSKINDTVGMTDPWRYRNKSQIPVGKNEQNEVIMGFYRQRSHDIIDMESCLIQDSQHQEVMNEVKSILKDLNVSIYQEQLKKGLMRHLVVRTGYHTDEMMIIFVTNGKKWPQKNAVVEKILDAFPNVTSIKQNINDSHSNVIMGRQSITLYGKDTIIDQLTDSTFKISDQSFYQINSEQTEKLYNKAIEYAQLTGNEVVLDTYCGIGTIGLYMAPHAKHVYGVEVVPSAIEDAQQNATINQCNNTTFVCGKAEEVILQWKAQGIKPDVVMVDPPRKGCDETFIQTLLTLEPKRIVYISCNPATQQRDALLLAEKYQLEEVTPVDMFPQTTHVETVALFNLK.

[4Fe-4S] cluster is bound by residues cysteine 74, cysteine 80, cysteine 83, and cysteine 162. Glutamine 286, tyrosine 315, glutamate 336, and aspartate 384 together coordinate S-adenosyl-L-methionine. Residue cysteine 411 is the Nucleophile of the active site.

The protein belongs to the class I-like SAM-binding methyltransferase superfamily. RNA M5U methyltransferase family.

This is an uncharacterized protein from Staphylococcus aureus (strain MW2).